We begin with the raw amino-acid sequence, 478 residues long: BUB3-interacting and GLEBS motif-containing protein ZNF207 (478 aa).

The tract at residues 1–92 (MGRKKKKQLK…EGIPEKDMDE (92 aa)) is microtubule-binding region. 2 C2H2-type zinc fingers span residues 11 to 34 (PWCWYCNRDFDDEKILIQHQKAKH) and 35 to 58 (FKCHICHKKLYTGPGLAIHCMQVH). Basic and acidic residues predominate over residues 99-111 (QKTQESQKKKQQD). Disordered stretches follow at residues 99-157 (QKTQ…PGMP), 238-276 (APTATVPAPQPPVTKPLFPSAGQMGTPVTSSSTASSNSE), 300-362 (VGTD…ATSK), and 384-478 (RNLP…GGRY). Positions 112 to 121 (DSDEYDDDDS) are enriched in acidic residues. Residues 127-136 (FQPQPVQPQQ) show a composition bias toward polar residues. The span at 142-157 (MAQPGLPPVPGAPGMP) shows a compositional bias: pro residues. Low complexity-rich tracts occupy residues 267-276 (SSSTASSNSE), 310-362 (TPAT…ATSK), and 433-446 (QGMPGYLPGAMPPY). Residues 359–391 (ATSKLIHPDEDISLEERRAQLPKYQRNLPRPGQ) are GLEBS. Residues 447–467 (GQGPPMVPPYQGGPPRPPMGM) show a composition bias toward pro residues.

In terms of assembly, interacts (via GLEBS region) with BUB3. Ubiquitous.

It is found in the nucleus. It localises to the chromosome. The protein resides in the centromere. Its subcellular location is the kinetochore. The protein localises to the cytoplasm. It is found in the cytoskeleton. It localises to the spindle. In terms of biological role, kinetochore- and microtubule-binding protein that plays a key role in spindle assembly. ZNF207/BuGZ is mainly composed of disordered low-complexity regions and undergoes phase transition or coacervation to form temperature-dependent liquid droplets. Coacervation promotes microtubule bundling and concentrates tubulin, promoting microtubule polymerization and assembly of spindle and spindle matrix by concentrating its building blocks. Also acts as a regulator of mitotic chromosome alignment by mediating the stability and kinetochore loading of BUB3. Mechanisms by which BUB3 is protected are unclear: according to a first report, ZNF207/BuGZ may act by blocking ubiquitination and proteasomal degradation of BUB3. According to another report, the stabilization is independent of the proteasome. The chain is BUB3-interacting and GLEBS motif-containing protein ZNF207 from Homo sapiens (Human).